A 64-amino-acid chain; its full sequence is Large ribosomal subunit protein uL29 (64 aa).

The protein belongs to the universal ribosomal protein uL29 family.

This Ralstonia pickettii (strain 12J) protein is Large ribosomal subunit protein uL29.